Here is a 1009-residue protein sequence, read N- to C-terminus: DNA ligase 4 (1009 aa).

Disordered stretches follow at residues 1–34 (METD…APTL) and 51–72 (KKKP…LSAA). Residues 51 to 65 (KKKPVGPAGNRRKAG) show a composition bias toward basic residues. Glutamate 315, lysine 317, leucine 318, arginine 322, glutamate 384, phenylalanine 424, glutamate 484, lysine 489, lysine 506, and lysine 508 together coordinate ATP. The N6-AMP-lysine intermediate role is filled by lysine 317. Residue glutamate 384 participates in Mg(2+) binding. Glutamate 484 serves as a coordination point for Mg(2+). BRCT domains follow at residues 715–808 (PSGH…PDLL) and 887–995 (PCGW…QHMP).

This sequence belongs to the ATP-dependent DNA ligase family. Mg(2+) is required as a cofactor.

Its subcellular location is the nucleus. The catalysed reaction is ATP + (deoxyribonucleotide)n-3'-hydroxyl + 5'-phospho-(deoxyribonucleotide)m = (deoxyribonucleotide)n+m + AMP + diphosphate.. In terms of biological role, DNA ligase involved in DNA non-homologous end joining (NHEJ); required for double-strand break (DSB) repair. This is DNA ligase 4 (lig4) from Emericella nidulans (strain FGSC A4 / ATCC 38163 / CBS 112.46 / NRRL 194 / M139) (Aspergillus nidulans).